A 107-amino-acid chain; its full sequence is Large ribosomal subunit protein uL24 (107 aa).

This sequence belongs to the universal ribosomal protein uL24 family. Part of the 50S ribosomal subunit.

One of two assembly initiator proteins, it binds directly to the 5'-end of the 23S rRNA, where it nucleates assembly of the 50S subunit. In terms of biological role, one of the proteins that surrounds the polypeptide exit tunnel on the outside of the subunit. The chain is Large ribosomal subunit protein uL24 from Streptomyces coelicolor (strain ATCC BAA-471 / A3(2) / M145).